The sequence spans 253 residues: CD151 antigen (253 aa).

Topologically, residues 1-18 (MGEFNEKKATCGTVCLKY) are cytoplasmic. 2 S-palmitoyl cysteine lipidation sites follow: cysteine 11 and cysteine 15. A helical membrane pass occupies residues 19-39 (LLFTYNCCFWLAGLAVMAVGI). The Extracellular segment spans residues 40–57 (WTLALKSDYISLLASSTY). A helical membrane pass occupies residues 58-78 (LATAYILVVAGVVVMVTGVLG). Residues 79 to 91 (CCATFKERRNLLR) are Cytoplasmic-facing. The helical transmembrane segment at 92–112 (LYFILLLIIFLLEIIAGILAY) threads the bilayer. Over 113–221 (VYYQQLNTEL…LESFIQEHLR (109 aa)) the chain is Extracellular. Asparagine 159 carries an N-linked (GlcNAc...) asparagine glycan. The chain crosses the membrane as a helical span at residues 222–242 (VIGAVGIGIACVQVFGMIFTC). Residues cysteine 242 and cysteine 243 are each lipidated (S-palmitoyl cysteine). The Cytoplasmic portion of the chain corresponds to 243–253 (CLYRSLKLEHY).

Belongs to the tetraspanin (TM4SF) family. Interacts with integrins ITGA3:ITGB1, ITGA5:ITGB1, ITGA3:ITGB1 and ITGA6:ITGB4 and with CD9 and CD181. Interacts (via the second extracellular domain) with integrin ITGAV:ITGB3. Interacts with ITGA3; this interaction modulates ITGA3 glycosylation pattern. Interacts with F11R. Interacts with RAC1 and CDC42; these interactions mediate physical association of RAC1 and CDC42 with integrin adhesion receptor complexes. In terms of processing, palmitoylated. Palmitoylation by ZDHHC2 regulates CD151 expression, association with other tetraspanin family proteins and function in cell adhesion. Ubiquitinated by RNF128 on lysine residues present in the tetraspanin amino terminus via 'Lys-48'-linked ubiquitin leading to proteasomal degradation.

Its subcellular location is the cell membrane. Structural component of specialized membrane microdomains known as tetraspanin-enriched microdomains (TERMs), which act as platforms for receptor clustering and signaling. Plays a role in various cellular and molecular mechanism through its association with both integrin and non-integrin proteins. These interactions facilitate critical cellular functions, including cell-to-cell communication, wound healing, platelet aggregation, trafficking, cell motility, and angiogenesis. Via interaction with JAM-A/F11R and integrin ITGA3:ITGB1, promotes the recruitment of signaling molecules such as RAC1, CDC42 and RhoGTPases to facilitate the polarization of epithelial cells and the reorganization of the actin cytoskeleton, which are critical steps in cell migration process. Regulates the glycosylation pattern of ITGA3:ITGB1 thereby modulating its activity. Plays an essential role in the maintenance of central laminin-binding integrin ITGA6:ITGB4-containing adhesion complexes. Essential for the proper assembly of the glomerular and tubular basement membranes in kidney. Contributes to T-cell activation by modulating integrin signaling leading to activation of downstream targets PTK2 and MAPK1/MAPK3. In Rattus norvegicus (Rat), this protein is CD151 antigen (Cd151).